The following is a 94-amino-acid chain: Large ribosomal subunit protein bL27 (94 aa).

The disordered stretch occupies residues 1–25; that stretch reads MAHKKGTGSTRNGRDSQSKRLGVKR.

This sequence belongs to the bacterial ribosomal protein bL27 family.

The sequence is that of Large ribosomal subunit protein bL27 from Gloeothece citriformis (strain PCC 7424) (Cyanothece sp. (strain PCC 7424)).